We begin with the raw amino-acid sequence, 158 residues long: Urease accessory protein UreE (158 aa).

The protein belongs to the UreE family.

Its subcellular location is the cytoplasm. Its function is as follows. Involved in urease metallocenter assembly. Binds nickel. Probably functions as a nickel donor during metallocenter assembly. This chain is Urease accessory protein UreE, found in Klebsiella pneumoniae subsp. pneumoniae (strain ATCC 700721 / MGH 78578).